The chain runs to 297 residues: Phospholipid scramblase 2 (297 aa).

The interval 1 to 72 is proline-rich domain (PRD); that stretch reads MRSWNSLFCL…NQPGRPEGVP (72 aa). The Cytoplasmic segment spans residues 1 to 276; that stretch reads MRSWNSLFCL…IQFPRDLDVK (276 aa). Position 149 is a phosphothreonine; by PKC (T149). S-palmitoyl cysteine attachment occurs at residues C172, C173, C174, C176, and C177. Residues 277–293 form a helical membrane-spanning segment; the sequence is MKAVMIGACFLIDYMFF. Residues 294 to 297 lie on the Extracellular side of the membrane; that stretch reads ERTR.

The protein belongs to the phospholipid scramblase family. It depends on Ca(2+) as a cofactor. As to expression, expression of isoform 1 seems restricted to testis.

The protein resides in the membrane. It localises to the nucleus. The catalysed reaction is a 1,2-diacyl-sn-glycero-3-phosphocholine(in) = a 1,2-diacyl-sn-glycero-3-phosphocholine(out). In terms of biological role, may catalyze calcium-induced ATP-independent rapid bidirectional and non-specific movement of phospholipids (lipid scrambling or lipid flip-flop) between the inner and outer leaflet of the plasma membrane. Its function is as follows. Has no phospholipid scramblase activity, due to the lack of a N-terminal proline-rich domain. The chain is Phospholipid scramblase 2 from Homo sapiens (Human).